The chain runs to 345 residues: MEHTHAHLAANSSACGLGFVPVVYYSFLLCLGLPANILTVIILSQLVARRQKSSYNYLLALAAADILVLFFIVFVDFLLEDFILTMQMPLIPDKIIEVLEFSSIHTSIWITVPLTVDRYIAVCHPLKYHTVSYPARTRKVILSVYITCFLTSIPYYWWPNIWTEDYISTSMHHVLVWIHCFTVYLVPCSIFFILNSIIVYKLRRKSNFRLRGYSTGKTTAILFTITSIFATLWAPRIIMILYHLYGAPIQNPWLVHIMLDVANMLALLNTAINFFLYCFISKRFRTMAAATLKALFKCQKQPVQFYTNHNFSITSSPWISPANSHCIKMLVYQYDKHGKPIKVSP.

At 1–21 (MEHTHAHLAANSSACGLGFVP) the chain is on the extracellular side. The N-linked (GlcNAc...) asparagine glycan is linked to Asn-11. The chain crosses the membrane as a helical span at residues 22 to 42 (VVYYSFLLCLGLPANILTVII). Topologically, residues 43–57 (LSQLVARRQKSSYNY) are cytoplasmic. The helical transmembrane segment at 58 to 78 (LLALAAADILVLFFIVFVDFL) threads the bilayer. The Extracellular portion of the chain corresponds to 79–94 (LEDFILTMQMPLIPDK). A helical transmembrane segment spans residues 95–115 (IIEVLEFSSIHTSIWITVPLT). The Cytoplasmic portion of the chain corresponds to 116-140 (VDRYIAVCHPLKYHTVSYPARTRKV). Residues 141–161 (ILSVYITCFLTSIPYYWWPNI) form a helical membrane-spanning segment. The Extracellular portion of the chain corresponds to 162-173 (WTEDYISTSMHH). Residues 174-194 (VLVWIHCFTVYLVPCSIFFIL) traverse the membrane as a helical segment. At 195–220 (NSIIVYKLRRKSNFRLRGYSTGKTTA) the chain is on the cytoplasmic side. The chain crosses the membrane as a helical span at residues 221 to 241 (ILFTITSIFATLWAPRIIMIL). Residues 242 to 260 (YHLYGAPIQNPWLVHIMLD) lie on the Extracellular side of the membrane. The helical transmembrane segment at 261–281 (VANMLALLNTAINFFLYCFIS) threads the bilayer. At 282 to 345 (KRFRTMAAAT…KHGKPIKVSP (64 aa)) the chain is on the cytoplasmic side.

It belongs to the G-protein coupled receptor 1 family. Expressed almost exclusively in the brain. Abundantly expressed in the ventrolateral region of caudate putamen, the habenular nucleus, the zona incerta, and the medial mammillary nucleus.

The protein localises to the cell membrane. Orphan receptor. Seems to act through a G(q/11)-mediated pathway. The polypeptide is Probable G-protein coupled receptor 139 (Gpr139) (Mus musculus (Mouse)).